A 478-amino-acid polypeptide reads, in one-letter code: uncharacterized protein (478 aa).

This is an uncharacterized protein from Schizosaccharomyces pombe (strain 972 / ATCC 24843) (Fission yeast).